The chain runs to 767 residues: Photosystem I P700 chlorophyll a apoprotein A1 (767 aa).

A disordered region spans residues 1–22 (MTISPPESGEKDKKILESPVKA). A compositionally biased stretch (basic and acidic residues) spans 8–22 (SGEKDKKILESPVKA). 8 helical membrane passes run 76–99 (IFSAHFGHLAVIFIWMSAAFFHGA), 162–185 (LMALAIGAVVMAALMLHAGIFHYH), 201–225 (LNHHIAGLVGLGSLAWAGHCIHIGA), 309–327 (VSHHHLAFGVIAIIGGHMY), 368–391 (RHAQLSVNLAMLGSLSILISHHMY), 407–433 (LGLFTHHMWIGGLFIVGAGAHAGIAMV), 455–477 (ALISHLNWVCMWLGFHSFGLYIH), and 558–576 (LMIHHIHAFQIHVTVLILL). Residues cysteine 600 and cysteine 609 each contribute to the [4Fe-4S] cluster site. A run of 2 helical transmembrane segments spans residues 616–637 (HVFLGLFWMYNCLSIVIFHFSW) and 681–703 (ISMYGLMFLGAHFIWAFSLMFLF). Histidine 692 contacts divinylchlorophyll a'. Residues methionine 700 and tyrosine 708 each contribute to the divinyl chlorophyll a site. A phylloquinone-binding site is contributed by tryptophan 709. The helical transmembrane segment at 741–761 (AVGVTHFLVGGIATTWAFFHA) threads the bilayer.

Belongs to the PsaA/PsaB family. As to quaternary structure, the PsaA/B heterodimer binds the P700 divinyl chlorophyll special pair and subsequent electron acceptors. PSI consists of a core antenna complex that captures photons, and an electron transfer chain that converts photonic excitation into a charge separation. The cyanobacterial PSI reaction center is composed of one copy each of PsaA,B,C,D,E,F,I,J,K,L,M and X, and forms trimeric complexes. It depends on PSI electron transfer chain: 5 divinyl chlorophyll a, 1 divinyl chlorophyll a', 2 phylloquinones and 3 4Fe-4S clusters. PSI core antenna: 90 divinyl chlorophyll a, 22 carotenoids, 3 phospholipids and 1 galactolipid. P700 is a divinyl chlorophyll a/divinyl chlorophyll a' dimer, A0 is one or more divinyl chlorophyll a, A1 is one or both phylloquinones and FX is a shared 4Fe-4S iron-sulfur center. as a cofactor.

Its subcellular location is the cellular thylakoid membrane. The enzyme catalyses reduced [plastocyanin] + hnu + oxidized [2Fe-2S]-[ferredoxin] = oxidized [plastocyanin] + reduced [2Fe-2S]-[ferredoxin]. Its function is as follows. PsaA and PsaB bind P700, the primary electron donor of photosystem I (PSI), as well as the electron acceptors A0, A1 and FX. PSI is a plastocyanin/cytochrome c6-ferredoxin oxidoreductase, converting photonic excitation into a charge separation, which transfers an electron from the donor P700 chlorophyll pair to the spectroscopically characterized acceptors A0, A1, FX, FA and FB in turn. Oxidized P700 is reduced on the lumenal side of the thylakoid membrane by plastocyanin or cytochrome c6. The chain is Photosystem I P700 chlorophyll a apoprotein A1 from Prochlorococcus marinus subsp. pastoris (strain CCMP1986 / NIES-2087 / MED4).